The sequence spans 404 residues: Glycerol-1-phosphate dehydrogenase [NAD(P)+] (404 aa).

NAD(+) contacts are provided by residues Asp-55, 117 to 121 (GTVHD), and 139 to 142 (TAPS). Asp-144 lines the substrate pocket. An NAD(+)-binding site is contributed by Ser-148. Asp-191 is a binding site for substrate. Positions 191 and 271 each coordinate Ni(2+). Position 275 (His-275) interacts with substrate. Ni(2+) is bound at residue His-291.

The protein belongs to the glycerol-1-phosphate dehydrogenase family. In terms of assembly, homodimer. Ni(2+) is required as a cofactor.

The protein resides in the cytoplasm. It catalyses the reaction sn-glycerol 1-phosphate + NAD(+) = dihydroxyacetone phosphate + NADH + H(+). The enzyme catalyses sn-glycerol 1-phosphate + NADP(+) = dihydroxyacetone phosphate + NADPH + H(+). Functionally, catalyzes the NAD(P)H-dependent reduction of dihydroxyacetonephosphate (DHAP or glycerone phosphate) to glycerol 1-phosphate (G1P). The G1P thus generated is probably used for the synthesis of phosphoglycerolipids in Gram-positive bacterial species. The polypeptide is Glycerol-1-phosphate dehydrogenase [NAD(P)+] (Geobacillus thermodenitrificans (strain NG80-2)).